The sequence spans 469 residues: Squamosa promoter-binding-like protein 3 (469 aa).

The tract at residues 96-118 (SAEEHDKNMDKGKSKVDDTGTSR) is disordered. A compositionally biased stretch (basic and acidic residues) spans 97–115 (AEEHDKNMDKGKSKVDDTG). An SBP-type zinc finger spans residues 179 to 256 (NPHCQVEGCN…HDHNARRRKP (78 aa)). Residues cysteine 182, cysteine 187, cysteine 204, histidine 207, cysteine 223, cysteine 226, histidine 230, and cysteine 242 each coordinate Zn(2+). The Bipartite nuclear localization signal signature appears at 239-255 (KRSCRRRLHDHNARRRK). Positions 446–469 (NDDDEDHLQLPKPSYDNSHYDQMN) are disordered. Residues 460–469 (YDNSHYDQMN) are compositionally biased toward polar residues.

As to expression, ubiquitous.

It is found in the nucleus. In terms of biological role, trans-acting factor that binds specifically to the consensus nucleotide sequence 5'-TNCGTACAA-3'. May be involved in panicle development. The polypeptide is Squamosa promoter-binding-like protein 3 (SPL3) (Oryza sativa subsp. indica (Rice)).